A 267-amino-acid polypeptide reads, in one-letter code: uncharacterized protein (267 aa).

Belongs to the lin-8 family.

This is an uncharacterized protein from Caenorhabditis elegans.